The following is a 339-amino-acid chain: Dihydroorotate dehydrogenase (quinone) (339 aa).

FMN contacts are provided by residues 64–68 (AGADK) and Thr88. Lys68 contacts substrate. Residue 113–117 (NRNGF) coordinates substrate. Positions 141 and 174 each coordinate FMN. Residue Asn174 participates in substrate binding. The Nucleophile role is filled by Ser177. Asn179 is a substrate binding site. Positions 219 and 247 each coordinate FMN. 248–249 (NT) is a substrate binding site. FMN is bound by residues Gly270, Gly299, and 320–321 (YS).

It belongs to the dihydroorotate dehydrogenase family. Type 2 subfamily. In terms of assembly, monomer. The cofactor is FMN.

Its subcellular location is the cell membrane. The catalysed reaction is (S)-dihydroorotate + a quinone = orotate + a quinol. Its pathway is pyrimidine metabolism; UMP biosynthesis via de novo pathway; orotate from (S)-dihydroorotate (quinone route): step 1/1. Catalyzes the conversion of dihydroorotate to orotate with quinone as electron acceptor. This is Dihydroorotate dehydrogenase (quinone) from Haemophilus influenzae (strain PittEE).